We begin with the raw amino-acid sequence, 182 residues long: Isopentenyl-diphosphate Delta-isomerase (182 aa).

Residues H25 and H32 each coordinate Mn(2+). The 135-residue stretch at 30-164 (LLHLAFSSWL…PWAFSPWMVM (135 aa)) folds into the Nudix hydrolase domain. Residue C67 is part of the active site. Residue H69 coordinates Mn(2+). E87 contributes to the Mg(2+) binding site. Mn(2+) is bound by residues E114 and E116. E116 is a catalytic residue.

Belongs to the IPP isomerase type 1 family. In terms of assembly, homodimer. Mg(2+) serves as cofactor. Requires Mn(2+) as cofactor.

It localises to the cytoplasm. It catalyses the reaction isopentenyl diphosphate = dimethylallyl diphosphate. The protein operates within isoprenoid biosynthesis; dimethylallyl diphosphate biosynthesis; dimethylallyl diphosphate from isopentenyl diphosphate: step 1/1. Catalyzes the 1,3-allylic rearrangement of the homoallylic substrate isopentenyl (IPP) to its highly electrophilic allylic isomer, dimethylallyl diphosphate (DMAPP). This is Isopentenyl-diphosphate Delta-isomerase from Escherichia coli (strain SMS-3-5 / SECEC).